The chain runs to 492 residues: 1-aminocyclopropane-1-carboxylate synthase 1 (492 aa).

Position 277 is an N6-(pyridoxal phosphate)lysine (lysine 277).

It belongs to the class-I pyridoxal-phosphate-dependent aminotransferase family. As to quaternary structure, homodimer. The cofactor is pyridoxal 5'-phosphate.

The enzyme catalyses S-adenosyl-L-methionine = 1-aminocyclopropane-1-carboxylate + S-methyl-5'-thioadenosine + H(+). It participates in alkene biosynthesis; ethylene biosynthesis via S-adenosyl-L-methionine; ethylene from S-adenosyl-L-methionine: step 1/2. Functionally, catalyzes the formation of 1-aminocyclopropane-1-carboxylate, a direct precursor of ethylene in higher plants. The polypeptide is 1-aminocyclopropane-1-carboxylate synthase 1 (ACS1) (Prunus mume (Japanese apricot)).